The primary structure comprises 405 residues: Serine--glyoxylate aminotransferase (405 aa).

Lys196 carries the N6-(pyridoxal phosphate)lysine modification.

It belongs to the class-V pyridoxal-phosphate-dependent aminotransferase family. Pyridoxal 5'-phosphate serves as cofactor.

The enzyme catalyses glyoxylate + L-serine = 3-hydroxypyruvate + glycine. It participates in one-carbon metabolism; formaldehyde assimilation via serine pathway. This Hyphomicrobium methylovorum protein is Serine--glyoxylate aminotransferase (sgaA).